Consider the following 556-residue polypeptide: 2-succinyl-5-enolpyruvyl-6-hydroxy-3-cyclohexene-1-carboxylate synthase (556 aa).

It belongs to the TPP enzyme family. MenD subfamily. Homodimer. It depends on Mg(2+) as a cofactor. Requires Mn(2+) as cofactor. The cofactor is thiamine diphosphate.

It carries out the reaction isochorismate + 2-oxoglutarate + H(+) = 5-enolpyruvoyl-6-hydroxy-2-succinyl-cyclohex-3-ene-1-carboxylate + CO2. Its pathway is quinol/quinone metabolism; 1,4-dihydroxy-2-naphthoate biosynthesis; 1,4-dihydroxy-2-naphthoate from chorismate: step 2/7. The protein operates within quinol/quinone metabolism; menaquinone biosynthesis. In terms of biological role, catalyzes the thiamine diphosphate-dependent decarboxylation of 2-oxoglutarate and the subsequent addition of the resulting succinic semialdehyde-thiamine pyrophosphate anion to isochorismate to yield 2-succinyl-5-enolpyruvyl-6-hydroxy-3-cyclohexene-1-carboxylate (SEPHCHC). The protein is 2-succinyl-5-enolpyruvyl-6-hydroxy-3-cyclohexene-1-carboxylate synthase of Escherichia coli (strain SMS-3-5 / SECEC).